The following is a 28-amino-acid chain: Peptide 2 (28 aa).

This sequence belongs to the short scorpion toxin superfamily. Potassium channel inhibitor family. Alpha-KTx 09 subfamily. Expressed by the venom gland.

The protein localises to the secreted. Its function is as follows. Blocks potassium channels. The chain is Peptide 2 from Hottentotta tamulus sindicus (Scorpion).